The primary structure comprises 427 residues: Trigger factor (427 aa).

The PPIase FKBP-type domain occupies 163-248 (GDTVILDFEG…LHEIKTKEVP (86 aa)).

It belongs to the FKBP-type PPIase family. Tig subfamily.

The protein localises to the cytoplasm. The catalysed reaction is [protein]-peptidylproline (omega=180) = [protein]-peptidylproline (omega=0). Involved in protein export. Acts as a chaperone by maintaining the newly synthesized protein in an open conformation. Functions as a peptidyl-prolyl cis-trans isomerase. This chain is Trigger factor, found in Listeria innocua serovar 6a (strain ATCC BAA-680 / CLIP 11262).